Consider the following 87-residue polypeptide: UPF0367 protein P9303_26451 (87 aa).

The protein belongs to the UPF0367 family.

This is UPF0367 protein P9303_26451 from Prochlorococcus marinus (strain MIT 9303).